The primary structure comprises 162 residues: Ribosome-binding factor A (162 aa).

Residues 121–162 are disordered; that stretch reads DEVARVAAGASPAGDPDPYKEPRAEDADDAEVDEPSGSRQAD. A compositionally biased stretch (low complexity) spans 125-136; sequence RVAAGASPAGDP.

It belongs to the RbfA family. Monomer. Binds 30S ribosomal subunits, but not 50S ribosomal subunits or 70S ribosomes.

It localises to the cytoplasm. Its function is as follows. One of several proteins that assist in the late maturation steps of the functional core of the 30S ribosomal subunit. Associates with free 30S ribosomal subunits (but not with 30S subunits that are part of 70S ribosomes or polysomes). Required for efficient processing of 16S rRNA. May interact with the 5'-terminal helix region of 16S rRNA. The sequence is that of Ribosome-binding factor A from Rhodococcus jostii (strain RHA1).